A 161-amino-acid polypeptide reads, in one-letter code: 2-C-methyl-D-erythritol 2,4-cyclodiphosphate synthase (161 aa).

A divalent metal cation is bound by residues aspartate 10 and histidine 12. 4-CDP-2-C-methyl-D-erythritol 2-phosphate contacts are provided by residues 10–12 and 36–37; these read DVH and HS. Histidine 44 serves as a coordination point for a divalent metal cation. Residues 58–60, 63–67, and arginine 144 contribute to the 4-CDP-2-C-methyl-D-erythritol 2-phosphate site; these read DIG and FSDTD.

This sequence belongs to the IspF family. In terms of assembly, homotrimer. Requires a divalent metal cation as cofactor.

The catalysed reaction is 4-CDP-2-C-methyl-D-erythritol 2-phosphate = 2-C-methyl-D-erythritol 2,4-cyclic diphosphate + CMP. The protein operates within isoprenoid biosynthesis; isopentenyl diphosphate biosynthesis via DXP pathway; isopentenyl diphosphate from 1-deoxy-D-xylulose 5-phosphate: step 4/6. Involved in the biosynthesis of isopentenyl diphosphate (IPP) and dimethylallyl diphosphate (DMAPP), two major building blocks of isoprenoid compounds. Catalyzes the conversion of 4-diphosphocytidyl-2-C-methyl-D-erythritol 2-phosphate (CDP-ME2P) to 2-C-methyl-D-erythritol 2,4-cyclodiphosphate (ME-CPP) with a corresponding release of cytidine 5-monophosphate (CMP). The sequence is that of 2-C-methyl-D-erythritol 2,4-cyclodiphosphate synthase from Burkholderia ambifaria (strain ATCC BAA-244 / DSM 16087 / CCUG 44356 / LMG 19182 / AMMD) (Burkholderia cepacia (strain AMMD)).